The primary structure comprises 490 residues: Acetyl-coenzyme A carboxylase carboxyl transferase subunit beta, chloroplastic (490 aa).

The interval 184–203 (LNSSENEGSSRRTRTKGSDL) is disordered. The CoA carboxyltransferase N-terminal domain maps to 221–490 (LWVQCENCYG…PLNQKSSKIK (270 aa)). Zn(2+)-binding residues include cysteine 225, cysteine 228, cysteine 244, and cysteine 247. A C4-type zinc finger spans residues 225–247 (CENCYGLNYKKFLKSKMNICEQC).

Belongs to the AccD/PCCB family. In terms of assembly, acetyl-CoA carboxylase is a heterohexamer composed of biotin carboxyl carrier protein, biotin carboxylase and 2 subunits each of ACCase subunit alpha and ACCase plastid-coded subunit beta (accD). Zn(2+) is required as a cofactor.

Its subcellular location is the plastid. It is found in the chloroplast stroma. The catalysed reaction is N(6)-carboxybiotinyl-L-lysyl-[protein] + acetyl-CoA = N(6)-biotinyl-L-lysyl-[protein] + malonyl-CoA. The protein operates within lipid metabolism; malonyl-CoA biosynthesis; malonyl-CoA from acetyl-CoA: step 1/1. Functionally, component of the acetyl coenzyme A carboxylase (ACC) complex. Biotin carboxylase (BC) catalyzes the carboxylation of biotin on its carrier protein (BCCP) and then the CO(2) group is transferred by the transcarboxylase to acetyl-CoA to form malonyl-CoA. The chain is Acetyl-coenzyme A carboxylase carboxyl transferase subunit beta, chloroplastic from Solanum bulbocastanum (Wild potato).